The chain runs to 156 residues: MAVKIKLTRLGKIRNAQYRVVIADSRTRRDGRAIETIGKYHPKEEPSLIDIDSERAQYWLSVGAQPTEPVEALLKITGDWQKFKGLPGTEGTLRVKEAKPTKLELFQAALAQAENEPVAEAITPKKKKAAKADEAKAEDTAADAEAPAADAEAADK.

The segment at 114–156 is disordered; it reads ENEPVAEAITPKKKKAAKADEAKAEDTAADAEAPAADAEAADK. The segment covering 130-139 has biased composition (basic and acidic residues); that stretch reads AKADEAKAED. The span at 143–156 shows a compositional bias: low complexity; the sequence is DAEAPAADAEAADK.

This sequence belongs to the bacterial ribosomal protein bS16 family.

In Rhodococcus erythropolis (strain PR4 / NBRC 100887), this protein is Small ribosomal subunit protein bS16.